Here is a 210-residue protein sequence, read N- to C-terminus: Small ribosomal subunit protein uS3 (210 aa).

One can recognise a KH type-2 domain in the interval Ile17 to Lys86.

Belongs to the universal ribosomal protein uS3 family. As to quaternary structure, part of the 30S ribosomal subunit.

Binds the lower part of the 30S subunit head. The chain is Small ribosomal subunit protein uS3 from Pyrococcus abyssi (strain GE5 / Orsay).